The primary structure comprises 438 residues: Diaminopimelate decarboxylase (438 aa).

Lys73 carries the post-translational modification N6-(pyridoxal phosphate)lysine. Pyridoxal 5'-phosphate-binding positions include Ser217, Gly254, and 294–297 (EPGR). Positions 297, 333, and 337 each coordinate substrate. Cys362 acts as the Proton donor in catalysis. The substrate site is built by Glu363 and Tyr391. Residue Tyr391 participates in pyridoxal 5'-phosphate binding.

Belongs to the Orn/Lys/Arg decarboxylase class-II family. LysA subfamily. Homodimer. Pyridoxal 5'-phosphate serves as cofactor.

It catalyses the reaction meso-2,6-diaminopimelate + H(+) = L-lysine + CO2. It functions in the pathway amino-acid biosynthesis; L-lysine biosynthesis via DAP pathway; L-lysine from DL-2,6-diaminopimelate: step 1/1. With respect to regulation, competitively inhibited by the substrate analog azelaic acid in vitro but not in vivo. Its function is as follows. Specifically catalyzes the decarboxylation of meso-diaminopimelate (meso-DAP) to L-lysine. The protein is Diaminopimelate decarboxylase of Methanocaldococcus jannaschii (strain ATCC 43067 / DSM 2661 / JAL-1 / JCM 10045 / NBRC 100440) (Methanococcus jannaschii).